The primary structure comprises 92 residues: MNGNKDAIFKALGDSTRRLILDELSERNELTLYELTIRLITKYDLSITRQAIAKHLSVLEDAGLVTSKRKGKYRVLIFNNEPLKNLLKGWIE.

Residues 1–92 (MNGNKDAIFK…LKNLLKGWIE (92 aa)) enclose the HTH arsR-type domain. The segment at residues 37 to 61 (IRLITKYDLSITRQAIAKHLSVLED) is a DNA-binding region (H-T-H motif).

This is an uncharacterized protein from Bacillus subtilis (strain 168).